The following is a 379-amino-acid chain: Carbamoyl phosphate synthase small chain (379 aa).

Positions 1 to 188 are CPSase; that stretch reads MSTPAILALA…ELGKGFTQPE (188 aa). 3 residues coordinate L-glutamine: Ser-47, Gly-240, and Gly-242. The region spanning 192-379 is the Glutamine amidotransferase type-1 domain; that stretch reads HVVAYDYGVK…FIELIEAAKK (188 aa). Residue Cys-269 is the Nucleophile of the active site. Residues Leu-270, Gln-273, Asn-311, Gly-313, and Phe-314 each coordinate L-glutamine. Residues His-353 and Glu-355 contribute to the active site.

The protein belongs to the CarA family. As to quaternary structure, composed of two chains; the small (or glutamine) chain promotes the hydrolysis of glutamine to ammonia, which is used by the large (or ammonia) chain to synthesize carbamoyl phosphate. Tetramer of heterodimers (alpha,beta)4.

It catalyses the reaction hydrogencarbonate + L-glutamine + 2 ATP + H2O = carbamoyl phosphate + L-glutamate + 2 ADP + phosphate + 2 H(+). The catalysed reaction is L-glutamine + H2O = L-glutamate + NH4(+). Its pathway is amino-acid biosynthesis; L-arginine biosynthesis; carbamoyl phosphate from bicarbonate: step 1/1. The protein operates within pyrimidine metabolism; UMP biosynthesis via de novo pathway; (S)-dihydroorotate from bicarbonate: step 1/3. Small subunit of the glutamine-dependent carbamoyl phosphate synthetase (CPSase). CPSase catalyzes the formation of carbamoyl phosphate from the ammonia moiety of glutamine, carbonate, and phosphate donated by ATP, constituting the first step of 2 biosynthetic pathways, one leading to arginine and/or urea and the other to pyrimidine nucleotides. The small subunit (glutamine amidotransferase) binds and cleaves glutamine to supply the large subunit with the substrate ammonia. This Acinetobacter baylyi (strain ATCC 33305 / BD413 / ADP1) protein is Carbamoyl phosphate synthase small chain.